A 157-amino-acid polypeptide reads, in one-letter code: NudC domain-containing protein 2 (157 aa).

Residue serine 2 is modified to N-acetylserine. A CS domain is found at cysteine 14–leucine 104. Residues phenylalanine 134–lysine 157 are disordered. Serine 142 bears the Phosphoserine mark. Tyrosine 145 carries the phosphotyrosine modification.

Interacts with LIS1.

The protein localises to the chromosome. It is found in the centromere. The protein resides in the kinetochore. Its subcellular location is the cytoplasm. It localises to the cytoskeleton. The protein localises to the microtubule organizing center. It is found in the centrosome. The protein resides in the spindle pole. In terms of biological role, may regulate the LIS1/dynein pathway by stabilizing LIS1 with Hsp90 chaperone. The protein is NudC domain-containing protein 2 (Nudcd2) of Mus musculus (Mouse).